Consider the following 192-residue polypeptide: NF-kappa-B inhibitor-interacting Ras-like protein 1 (192 aa).

11 to 18 contacts GTP; the sequence is GLLSVGKT. The Effector region motif lies at 35-43; sequence DCETMEDVY. An interactions with NFKBIA and NFKBIB region spans residues 58-93; that stretch reads HLYDTRGLQEGVELPKHYFSFADGFVLVYSVNNLES. Residues 61 to 65 and 120 to 123 each bind GTP; these read DTRGL and NKID. The interval 168 to 192 is disordered; that stretch reads LSQPQSKSSFPLPGRKNKGNSNSEN.

This sequence belongs to the small GTPase superfamily. Ras family. KappaB-Ras subfamily. In terms of assembly, interacts with both NF-kappa-B inhibitor alpha (NFKBIA) and beta (NFKBIB) in vitro. However, it probably only interacts with NFKBIB in vivo. Forms a complex with NFKBIB and NF-kappa-B heterodimer (p50/NFKB1 and p65/RELA). Also interacts with c-Rel (REL). In terms of tissue distribution, widely expressed.

The protein resides in the cytoplasm. Atypical Ras-like protein that acts as a potent regulator of NF-kappa-B activity by preventing the degradation of NF-kappa-B inhibitor beta (NFKBIB) by most signals, explaining why NFKBIB is more resistant to degradation. May act by blocking phosphorylation of NFKBIB and mediating cytoplasmic retention of p65/RELA NF-kappa-B subunit. It is unclear whether it acts as a GTPase. Both GTP- and GDP-bound forms block phosphorylation of NFKBIB. This Homo sapiens (Human) protein is NF-kappa-B inhibitor-interacting Ras-like protein 1 (NKIRAS1).